A 383-amino-acid chain; its full sequence is ATP phosphoribosyltransferase regulatory subunit (383 aa).

The protein belongs to the class-II aminoacyl-tRNA synthetase family. HisZ subfamily. In terms of assembly, heteromultimer composed of HisG and HisZ subunits.

It localises to the cytoplasm. Its pathway is amino-acid biosynthesis; L-histidine biosynthesis; L-histidine from 5-phospho-alpha-D-ribose 1-diphosphate: step 1/9. In terms of biological role, required for the first step of histidine biosynthesis. May allow the feedback regulation of ATP phosphoribosyltransferase activity by histidine. This is ATP phosphoribosyltransferase regulatory subunit from Cupriavidus metallidurans (strain ATCC 43123 / DSM 2839 / NBRC 102507 / CH34) (Ralstonia metallidurans).